A 408-amino-acid chain; its full sequence is Retron Ec48 reverse transcriptase (408 aa).

In terms of domain architecture, Reverse transcriptase spans 43–269 (EELKAIAELP…EPIKVHGLRV (227 aa)). Mg(2+) contacts are provided by aspartate 137, aspartate 216, and aspartate 217.

This sequence belongs to the bacterial reverse transcriptase family.

The catalysed reaction is DNA(n) + a 2'-deoxyribonucleoside 5'-triphosphate = DNA(n+1) + diphosphate. Reverse transcriptase (RT) component of antiviral defense system retron Ec48, composed of a non-coding RNA (ncRNA), this reverse transcriptase (RT) and the following membrane protein. Expression of this retron confers protection against bacteriophages lambda, T2, T4, T5 and T7. At multiplicity of infection (MOI) of 0.02 cultures grow normally when infected with lambda without collapsing, at MOI 2 cultures enter growth stasis. At MOI 3 cell membranes are permeabilized within 15 minutes of infection but do not lyse, suggesting the phage are not able to finish a replication cycle. Antiviral defense is suppressed by mutations that knockout the lambda gam expression or phage T7 gp5.9 expression; both viral genes inhibit host RecBCD. The Ec48 retron may sense the integrity of the RecBCD enzyme; when RecBCD is perturbed by viral proteins the Ec48 effector (the membrane protein) is activated, leading to abortive infection and bacterial growth arrest. Responsible for synthesis of msDNA-Ec48 (a branched molecule with RNA linked by a 2',5'-phosphodiester bond to ssDNA). The retron transcript serves as primer (from a conserved internal G residue) and template for the reaction, and codes for the RT. The chain is Retron Ec48 reverse transcriptase from Escherichia coli.